The sequence spans 277 residues: Tryptophan synthase alpha chain (277 aa).

Active-site proton acceptor residues include Glu-42 and Glu-53.

It belongs to the TrpA family. As to quaternary structure, tetramer of two alpha and two beta chains.

It carries out the reaction (1S,2R)-1-C-(indol-3-yl)glycerol 3-phosphate + L-serine = D-glyceraldehyde 3-phosphate + L-tryptophan + H2O. Its pathway is amino-acid biosynthesis; L-tryptophan biosynthesis; L-tryptophan from chorismate: step 5/5. The alpha subunit is responsible for the aldol cleavage of indoleglycerol phosphate to indole and glyceraldehyde 3-phosphate. The sequence is that of Tryptophan synthase alpha chain from Natronomonas pharaonis (strain ATCC 35678 / DSM 2160 / CIP 103997 / JCM 8858 / NBRC 14720 / NCIMB 2260 / Gabara) (Halobacterium pharaonis).